A 389-amino-acid polypeptide reads, in one-letter code: 26S proteasome regulatory subunit 6B homolog (389 aa).

175–182 (GPPGTGKT) contacts ATP.

This sequence belongs to the AAA ATPase family.

The protein resides in the cytoplasm. The protein localises to the nucleus. Functionally, the 26S proteasome is involved in the ATP-dependent degradation of ubiquitinated proteins. The regulatory (or ATPase) complex confers ATP dependency and substrate specificity to the 26S complex. The sequence is that of 26S proteasome regulatory subunit 6B homolog (rpt3) from Schizosaccharomyces pombe (strain 972 / ATCC 24843) (Fission yeast).